Consider the following 347-residue polypeptide: Ribosomal RNA small subunit methyltransferase C (347 aa).

This sequence belongs to the methyltransferase superfamily. RsmC family. As to quaternary structure, monomer.

It localises to the cytoplasm. The enzyme catalyses guanosine(1207) in 16S rRNA + S-adenosyl-L-methionine = N(2)-methylguanosine(1207) in 16S rRNA + S-adenosyl-L-homocysteine + H(+). Specifically methylates the guanine in position 1207 of 16S rRNA in the 30S particle. The protein is Ribosomal RNA small subunit methyltransferase C of Yersinia pseudotuberculosis serotype O:1b (strain IP 31758).